The sequence spans 168 residues: Protein-export protein SecB (168 aa).

The protein belongs to the SecB family. As to quaternary structure, homotetramer, a dimer of dimers. One homotetramer interacts with 1 SecA dimer.

The protein localises to the cytoplasm. Functionally, one of the proteins required for the normal export of preproteins out of the cell cytoplasm. It is a molecular chaperone that binds to a subset of precursor proteins, maintaining them in a translocation-competent state. It also specifically binds to its receptor SecA. The polypeptide is Protein-export protein SecB (Haemophilus influenzae (strain PittGG)).